The primary structure comprises 975 residues: Probable dipeptidyl-aminopeptidase B (975 aa).

A compositionally biased stretch (basic and acidic residues) spans 1–20; it reads MAEHGHNMWEEEPSKGRDSL. The tract at residues 1 to 111 is disordered; the sequence is MAEHGHNMWE…LSAASGSAGK (111 aa). At 1–125 the chain is on the cytoplasmic side; that stretch reads MAEHGHNMWE…YRMMDRGLRR (125 aa). The span at 22 to 31 shows a compositional bias: low complexity; that stretch reads SDSSASTTSL. Residues 68–84 show a composition bias toward acidic residues; that stretch reads LDDEDPLKDEASGDYDL. The helical; Signal-anchor for type II membrane protein transmembrane segment at 126–146 threads the bilayer; it reads VLIIASLVFVTAWVGGLFIYI. The Vacuolar segment spans residues 147–975; that stretch reads SHKSYLHGSE…IDNAKPQGKR (829 aa). N-linked (GlcNAc...) asparagine glycosylation is found at Asn207, Asn397, and Asn622. The active-site Charge relay system is Ser826. Asn885 carries N-linked (GlcNAc...) asparagine glycosylation. Active-site charge relay system residues include Asp903 and His936.

Belongs to the peptidase S9B family.

The protein localises to the vacuole membrane. The catalysed reaction is Release of an N-terminal dipeptide, Xaa-Yaa-|-Zaa-, from a polypeptide, preferentially when Yaa is Pro, provided Zaa is neither Pro nor hydroxyproline.. Type IV dipeptidyl-peptidase which removes N-terminal dipeptides sequentially from polypeptides having unsubstituted N-termini provided that the penultimate residue is proline. The protein is Probable dipeptidyl-aminopeptidase B (DAPB) of Grosmannia clavigera (strain kw1407 / UAMH 11150) (Blue stain fungus).